The following is a 99-amino-acid chain: Small ribosomal subunit protein bS20 (99 aa).

Positions 1 to 20 (MASAKPKKKNPRLASGRKRV) are enriched in basic residues. A disordered region spans residues 1 to 21 (MASAKPKKKNPRLASGRKRVR).

This sequence belongs to the bacterial ribosomal protein bS20 family.

Functionally, binds directly to 16S ribosomal RNA. The polypeptide is Small ribosomal subunit protein bS20 (Verminephrobacter eiseniae (strain EF01-2)).